A 386-amino-acid polypeptide reads, in one-letter code: MDRFVWTSGLLEINETLVIQQRGVRIYDGEEKIKFDAGTLLLSTHRLIWRDQKNHECCMAILLSQIVFIEEQAAGIGKSAKIVVHLHPAPPNKEPGPFQSSKNSYIKLSFKEHGQIEFYRRLSEEMTQRRWENMPVSQSLQTNRGPQPGRIRAVGIVGIERKLEEKRKETDKNISEAFEDLSKLMIKAKEMVELSKSIANKIKDKQGDITEDETIRFKSYLLSMGIANPVTRETYGSGTQYHMQLAKQLAGILQVPLEERGGIMSLTEVYCLVNRARGMELLSPEDLVNACKMLEALKLPLRLRVFDSGVMVIELQSHKEEEMVASALETVSEKGSLTSEEFAKLVGMSVLLAKERLLLAEKMGHLCRDDSVEGLRFYPNLFMTQS.

The GLUE N-terminal domain maps to 1-88; sequence MDRFVWTSGL…SAKIVVHLHP (88 aa). The GLUE C-terminal domain maps to 105 to 138; that stretch reads YIKLSFKEHGQIEFYRRLSEEMTQRRWENMPVSQ. Residues 160–185 are a coiled coil; sequence ERKLEEKRKETDKNISEAFEDLSKLM.

It belongs to the VPS36 family. Component of a complex at least composed of ELL, SNF8/EAP30, VPS25/EAP20 and VPS36/EAP45. Component of the endosomal sorting complex required for transport II (ESCRT-II), composed of SNF8, VPS36 and two copies of VPS25. Interacts with VPS25, SNF8, TSG101 and CHMP6. Interacts (via GLUE domain) with ubiquitin. Interacts with RILPL1 (via the C-terminal domain); which recruits ESCRT-II to the endosome membranes. Interacts with ECPAS.

It is found in the cytoplasm. It localises to the endosome. Its subcellular location is the late endosome. The protein resides in the membrane. The protein localises to the nucleus. In terms of biological role, component of the ESCRT-II complex (endosomal sorting complex required for transport II), which is required for multivesicular body (MVB) formation and sorting of endosomal cargo proteins into MVBs. The MVB pathway mediates delivery of transmembrane proteins into the lumen of the lysosome for degradation. The ESCRT-II complex is probably involved in the recruitment of the ESCRT-III complex. Its ability to bind ubiquitin probably plays a role in endosomal sorting of ubiquitinated cargo proteins by ESCRT complexes. The ESCRT-II complex may also play a role in transcription regulation, possibly via its interaction with ELL. Binds phosphoinosides such as PtdIns(3,4,5)P3. The protein is Vacuolar protein-sorting-associated protein 36 (VPS36) of Homo sapiens (Human).